Here is a 480-residue protein sequence, read N- to C-terminus: Trigger factor (480 aa).

The PPIase FKBP-type domain maps to 169-264 (GDIAVVDFKG…LKELKEKELP (96 aa)). The tract at residues 441-480 (PEGSLSPAEETEAAESDADADVSQTEQENSEPSTTEVTEG) is disordered. The segment covering 449–460 (EETEAAESDADA) has biased composition (acidic residues). Residues 462–480 (VSQTEQENSEPSTTEVTEG) are compositionally biased toward polar residues.

The protein belongs to the FKBP-type PPIase family. Tig subfamily.

The protein localises to the cytoplasm. The catalysed reaction is [protein]-peptidylproline (omega=180) = [protein]-peptidylproline (omega=0). Its function is as follows. Involved in protein export. Acts as a chaperone by maintaining the newly synthesized protein in an open conformation. Functions as a peptidyl-prolyl cis-trans isomerase. This is Trigger factor from Nostoc punctiforme (strain ATCC 29133 / PCC 73102).